We begin with the raw amino-acid sequence, 102 residues long: Large ribosomal subunit protein uL24 (102 aa).

Belongs to the universal ribosomal protein uL24 family. As to quaternary structure, part of the 50S ribosomal subunit.

Functionally, one of two assembly initiator proteins, it binds directly to the 5'-end of the 23S rRNA, where it nucleates assembly of the 50S subunit. Its function is as follows. One of the proteins that surrounds the polypeptide exit tunnel on the outside of the subunit. This chain is Large ribosomal subunit protein uL24, found in Cupriavidus pinatubonensis (strain JMP 134 / LMG 1197) (Cupriavidus necator (strain JMP 134)).